Consider the following 247-residue polypeptide: 2,3-bisphosphoglycerate-dependent phosphoglycerate mutase (247 aa).

Substrate contacts are provided by residues 8–15 (RHGESQWN), 21–22 (TG), Arg-60, 87–90 (ERHY), Lys-98, 114–115 (RR), and 183–184 (GN). His-9 (tele-phosphohistidine intermediate) is an active-site residue. Glu-87 serves as the catalytic Proton donor/acceptor.

This sequence belongs to the phosphoglycerate mutase family. BPG-dependent PGAM subfamily.

The catalysed reaction is (2R)-2-phosphoglycerate = (2R)-3-phosphoglycerate. Its pathway is carbohydrate degradation; glycolysis; pyruvate from D-glyceraldehyde 3-phosphate: step 3/5. Functionally, catalyzes the interconversion of 2-phosphoglycerate and 3-phosphoglycerate. The sequence is that of 2,3-bisphosphoglycerate-dependent phosphoglycerate mutase from Chlorobium limicola (strain DSM 245 / NBRC 103803 / 6330).